A 247-amino-acid polypeptide reads, in one-letter code: Neurotrophic factor BDNF precursor form (247 aa).

An N-terminal signal peptide occupies residues 1–18; the sequence is MTILFLTMVISYFGCMKA. A propeptide spanning residues 19 to 128 is cleaved from the precursor; sequence APMKEANVRG…AANMSMRVRR (110 aa). Asn121 carries N-linked (GlcNAc...) asparagine glycosylation. 3 disulfide bridges follow: Cys141/Cys208, Cys186/Cys237, and Cys196/Cys239.

This sequence belongs to the NGF-beta family. As to quaternary structure, monomers and homodimers. Binds to NTRK2/TRKB. Can form heterodimers with other neurotrophin family members, such as NTF3 and NTF4 (in vitro), but the physiological relevance of this is not clear. BDNF precursor form: interacts with the heterodimer formed by NGFR and SORCS2. Mature BDNF has much lower affinity for the heterodimer formed by NGFR and SORCS2. N-glycosylated and glycosulfated, contrary to mature BDNF. In terms of processing, mature BDNF is produced by proteolytic removal of the propeptide, catalyzed by a FURIN family member. In addition, the precursor form is proteolytically cleaved within the propeptide, but this is not an obligatory intermediate for the production of mature BDNF. Can be converted into mature BDNF by plasmin (PLG).

It is found in the secreted. Functionally, important signaling molecule that activates signaling cascades downstream of NTRK2. During development, promotes the survival and differentiation of selected neuronal populations of the peripheral and central nervous systems. Participates in axonal growth, pathfinding and in the modulation of dendritic growth and morphology. Major regulator of synaptic transmission and plasticity at adult synapses in many regions of the CNS. The versatility of BDNF is emphasized by its contribution to a range of adaptive neuronal responses including long-term potentiation (LTP), long-term depression (LTD), certain forms of short-term synaptic plasticity, as well as homeostatic regulation of intrinsic neuronal excitability. Its function is as follows. Important signaling molecule that activates signaling cascades downstream of NTRK2. Activates signaling cascades via the heterodimeric receptor formed by NGFR and SORCS2. Signaling via NGFR and SORCS2 plays a role in synaptic plasticity and long-term depression (LTD). Binding to NGFR and SORCS2 promotes neuronal apoptosis. Promotes neuronal growth cone collapse. The polypeptide is Neurotrophic factor BDNF precursor form (BDNF) (Ailuropoda melanoleuca (Giant panda)).